The primary structure comprises 401 residues: Chorismate synthase (401 aa).

NADP(+)-binding residues include R40 and R46. FMN is bound by residues 135 to 137 (RAS), 256 to 257 (QA), G302, 317 to 321 (KPISS), and R343.

It belongs to the chorismate synthase family. In terms of assembly, homotetramer. It depends on FMNH2 as a cofactor.

It carries out the reaction 5-O-(1-carboxyvinyl)-3-phosphoshikimate = chorismate + phosphate. The protein operates within metabolic intermediate biosynthesis; chorismate biosynthesis; chorismate from D-erythrose 4-phosphate and phosphoenolpyruvate: step 7/7. Catalyzes the anti-1,4-elimination of the C-3 phosphate and the C-6 proR hydrogen from 5-enolpyruvylshikimate-3-phosphate (EPSP) to yield chorismate, which is the branch point compound that serves as the starting substrate for the three terminal pathways of aromatic amino acid biosynthesis. This reaction introduces a second double bond into the aromatic ring system. This is Chorismate synthase from Saccharopolyspora erythraea (strain ATCC 11635 / DSM 40517 / JCM 4748 / NBRC 13426 / NCIMB 8594 / NRRL 2338).